The following is a 221-amino-acid chain: Thymine/uracil-DNA glycosylase (221 aa).

In terms of domain architecture, HhH spans 105–133 (DYGGRVPRNRKAILDLPGVGKYTCAAVMC). C197, C204, C207, and C213 together coordinate [4Fe-4S] cluster.

Belongs to the Nth/MutY family. Requires [4Fe-4S] cluster as cofactor.

The enzyme catalyses Hydrolyzes mismatched double-stranded DNA and polynucleotides, releasing free thymine.. DNA glycosylase that excises thymine from T/G mismatches and uracil from U/G mismatches. Acts as a repair enzyme able to counteract the mutagenic effect of spontaneous hydrolytic deamination of DNA 5-methylcytosine (5-meC) residues that leads to the formation of T/G mismatches. May also repair U/G mismatches arising from hydrolytic deamination of DNA cytosine residues. G/G, A/G, T/C and U/C are minor substrates. The sequence is that of Thymine/uracil-DNA glycosylase from Methanothermobacter thermautotrophicus (Methanobacterium thermoformicicum).